Here is a 306-residue protein sequence, read N- to C-terminus: MELVFLGTGAGVPSRGRNVTSIALSMLNERNTIWLFDCGEATQHQIMRSQIKLSKLEKIFITHMHGDHIFGLPGLLSSRSFQGGDSNLTIYGPAGIAEYVETSLRLSGTRLTYKINFEEIEPGLIFEDEMFLVTADDLDHGVRSFGYRIVEKDKQGALNAEKLKADGVEAGPVFQKLKNGEIVTLADGRVIDGKNYIGEPQKGKIISIFGDTKETANELELALNADILVHEATFEGDKAKMAGEYMHSTTLQAANLAKTANVKKLILTHISSRYDRDASKELLIEAKTIFENTEIAYDLAVFPIGE.

Residues His-63, His-65, Asp-67, His-68, His-140, Asp-211, and His-269 each contribute to the Zn(2+) site. The Proton acceptor role is filled by Asp-67.

The protein belongs to the RNase Z family. In terms of assembly, homodimer. The cofactor is Zn(2+).

It carries out the reaction Endonucleolytic cleavage of RNA, removing extra 3' nucleotides from tRNA precursor, generating 3' termini of tRNAs. A 3'-hydroxy group is left at the tRNA terminus and a 5'-phosphoryl group is left at the trailer molecule.. Functionally, zinc phosphodiesterase, which displays some tRNA 3'-processing endonuclease activity. Probably involved in tRNA maturation, by removing a 3'-trailer from precursor tRNA. The protein is Ribonuclease Z of Listeria monocytogenes serotype 4b (strain CLIP80459).